We begin with the raw amino-acid sequence, 184 residues long: Copper transporter 6 (184 aa).

A compositionally biased stretch (low complexity) spans 1 to 25 (MRGMGDDGMGPMAMAPPRSGHATAA). Positions 1–27 (MRGMGDDGMGPMAMAPPRSGHATAAAP) are disordered. 2 helical membrane passes run 64 to 84 (YALCLLFVLALAALTEGLSVL) and 124 to 144 (MAYLVMLAVMSFNVGVLLAAV).

This sequence belongs to the copper transporter (Ctr) (TC 1.A.56) family. SLC31A subfamily.

It localises to the membrane. Involved in the transport of copper. In Oryza sativa subsp. japonica (Rice), this protein is Copper transporter 6 (COPT6).